The following is a 668-amino-acid chain: DNA ligase (668 aa).

Residues 35–39 and 83–84 contribute to the NAD(+) site; these read DKEYD and SL. K125 acts as the N6-AMP-lysine intermediate in catalysis. Positions 147, 181, and 317 each coordinate NAD(+). Positions 410, 413, 426, and 432 each coordinate Zn(2+). The BRCT domain maps to 591–668; the sequence is KKDNKFNGKT…TEEEFNEMIN (78 aa).

It belongs to the NAD-dependent DNA ligase family. LigA subfamily. Requires Mg(2+) as cofactor. Mn(2+) is required as a cofactor.

The enzyme catalyses NAD(+) + (deoxyribonucleotide)n-3'-hydroxyl + 5'-phospho-(deoxyribonucleotide)m = (deoxyribonucleotide)n+m + AMP + beta-nicotinamide D-nucleotide.. Functionally, DNA ligase that catalyzes the formation of phosphodiester linkages between 5'-phosphoryl and 3'-hydroxyl groups in double-stranded DNA using NAD as a coenzyme and as the energy source for the reaction. It is essential for DNA replication and repair of damaged DNA. The protein is DNA ligase of Clostridium tetani (strain Massachusetts / E88).